Reading from the N-terminus, the 859-residue chain is Leucine--tRNA ligase (859 aa).

The short motif at Pro-42 to His-52 is the 'HIGH' region element. A 'KMSKS' region motif is present at residues Lys-618–Ser-622. Lys-621 serves as a coordination point for ATP.

This sequence belongs to the class-I aminoacyl-tRNA synthetase family.

The protein resides in the cytoplasm. It catalyses the reaction tRNA(Leu) + L-leucine + ATP = L-leucyl-tRNA(Leu) + AMP + diphosphate. This chain is Leucine--tRNA ligase, found in Shewanella amazonensis (strain ATCC BAA-1098 / SB2B).